Consider the following 67-residue polypeptide: Protein AaeX (67 aa).

The next 2 membrane-spanning stretches (helical) occupy residues 3–23 and 43–63; these read LFPVIVVFGLSFPPIFFKLLL and FVWHPALFNTALYCCLFYLIS.

This sequence belongs to the AaeX family.

Its subcellular location is the cell membrane. The polypeptide is Protein AaeX (Salmonella gallinarum (strain 287/91 / NCTC 13346)).